Reading from the N-terminus, the 66-residue chain is Hirudin-PA (66 aa).

The segment at 1–3 (ITY) is interaction with thrombin active site. Cystine bridges form between C6–C14, C16–C28, and C22–C39. A disordered region spans residues 39 to 66 (CVTGEGTPKPQSHNQGDFEPIPEDAYDE). T45 carries O-linked (GalNAc...) threonine glycosylation. The interaction with fibrinogen-binding exosite of thrombin stretch occupies residues 55–66 (DFEPIPEDAYDE). Y64 carries the post-translational modification Sulfotyrosine.

Belongs to the protease inhibitor I14 (hirudin) family.

It is found in the secreted. Hirudin is a potent thrombin-specific protease inhibitor. It forms a stable non-covalent complex with alpha-thrombin, thereby abolishing its ability to cleave fibrinogen. The polypeptide is Hirudin-PA (Hirudo medicinalis (Medicinal leech)).